Reading from the N-terminus, the 831-residue chain is Pleckstrin homology-like domain family B member 1 (831 aa).

The span at 1–11 (LTLGARGRRTR) shows a compositional bias: basic residues. Residues 1–73 (LTLGARGRRT…PIPRERKNSI (73 aa)) form a disordered region. Arg-6 is modified (omega-N-methylarginine). Phosphoserine occurs at positions 12 and 14. Thr-16 carries the phosphothreonine modification. Phosphoserine occurs at positions 27, 33, 45, 49, 57, 72, 77, and 175. The segment covering 39-51 (GSLTGASPRQSPH) has biased composition (polar residues). Disordered regions lie at residues 160-209 (RSGE…LQGE) and 416-465 (NGDM…QNGT). Positions 174–188 (ESMERSDEENLKEEC) are enriched in basic and acidic residues. The stretch at 180–306 (DEENLKEECS…TETKLFEDLE (127 aa)) forms a coiled coil. Phosphoserine is present on residues Ser-421 and Ser-467. Residues 421–442 (SPLPRTRSGPLPSSSGSSSSSS) are compositionally biased toward low complexity. The interval 584–603 (SMETSISTGGNSACSPDNMS) is disordered. Residues 610-676 (MGKIEEMEKM…QQLVEKEVKL (67 aa)) are a coiled coil. The PH domain maps to 721 to 824 (SKVCRGYLIK…WMDVIVTGAE (104 aa)).

In Rattus norvegicus (Rat), this protein is Pleckstrin homology-like domain family B member 1 (Phldb1).